The primary structure comprises 295 residues: Nucleotide-binding protein YvcJ (295 aa).

Residue 16 to 23 coordinates ATP; it reads GMSGAGKT. 67-70 contributes to the GTP binding site; the sequence is DLRG.

This sequence belongs to the RapZ-like family.

In terms of biological role, displays ATPase and GTPase activities. Can also hydrolyze pNPP. May affect the expression of competence via the phosphorylation of a cellular component. This is Nucleotide-binding protein YvcJ (yvcJ) from Bacillus subtilis (strain 168).